The primary structure comprises 233 residues: Peroxisomal membrane protein 11-5 (233 aa).

The Cytoplasmic segment spans residues 1–92; that stretch reads MSSLESARAD…PLILLGKSKN (92 aa). The chain crosses the membrane as a helical span at residues 93-113; that stretch reads ALLSTFLFLDQIVWAGRTGIY. The Lumenal portion of the chain corresponds to 114–206; the sequence is KNKERAEFLS…LLQLAPKKVT (93 aa). A helical transmembrane segment spans residues 207–226; sequence PRVTGAFGFASSLIACYQLL.

This sequence belongs to the peroxin-11 family. Expressed in seedlings, roots, shoots, leaf sheaths, flag leaf, panicles, spikelets, and endosperm.

The protein localises to the peroxisome membrane. Its function is as follows. Involved in peroxisomal proliferation. The protein is Peroxisomal membrane protein 11-5 (PEX11-5) of Oryza sativa subsp. japonica (Rice).